The chain runs to 392 residues: Stilbene synthase 2 (392 aa).

Position 55 to 58 (55 to 58) interacts with substrate; it reads KFNR. Cys-164 is a catalytic residue. Substrate-binding positions include Leu-267 and 305–307; that span reads GGP.

This sequence belongs to the thiolase-like superfamily. Chalcone/stilbene synthases family. As to quaternary structure, homodimer.

It is found in the cytoplasm. It carries out the reaction 4-coumaroyl-CoA + 3 malonyl-CoA + 3 H(+) = trans-resveratrol + 4 CO2 + 4 CoA. It participates in phytoalexin biosynthesis; 3,4',5-trihydroxystilbene biosynthesis; 3,4',5-trihydroxystilbene from trans-4-coumarate: step 2/2. Mediates resistance to pathogens which are sensitive to stilbenes. The chain is Stilbene synthase 2 from Vitis vinifera (Grape).